Reading from the N-terminus, the 436-residue chain is Trigger factor (436 aa).

Residues 161 to 246 form the PPIase FKBP-type domain; the sequence is DDQLNIDFVG…VNSVAEPKLP (86 aa).

This sequence belongs to the FKBP-type PPIase family. Tig subfamily.

The protein resides in the cytoplasm. The catalysed reaction is [protein]-peptidylproline (omega=180) = [protein]-peptidylproline (omega=0). Functionally, involved in protein export. Acts as a chaperone by maintaining the newly synthesized protein in an open conformation. Functions as a peptidyl-prolyl cis-trans isomerase. The sequence is that of Trigger factor from Pseudomonas paraeruginosa (strain DSM 24068 / PA7) (Pseudomonas aeruginosa (strain PA7)).